We begin with the raw amino-acid sequence, 379 residues long: Bifunctional riboflavin kinase/FMN phosphatase (379 aa).

An N-acetylserine modification is found at serine 2. The active-site Nucleophile; for FMN phosphatase activity is the aspartate 17. Mg(2+)-binding residues include aspartate 17 and aspartate 19. Residue aspartate 19 is the Proton donor; for FMN phosphatase activity of the active site. Residues glycine 248, lysine 254, threonine 260, and asparagine 262 each contribute to the ATP site. Position 260 (threonine 260) interacts with Mg(2+). Glutamate 312 (nucleophile; for riboflavin kinase activity) is an active-site residue. Positions 315, 317, and 324 each coordinate ATP. FMN is bound by residues arginine 337 and phenylalanine 342.

In the N-terminal section; belongs to the HAD-like hydrolase superfamily. CbbY/CbbZ/Gph/YieH family. This sequence in the C-terminal section; belongs to the flavokinase family. As to quaternary structure, monomer. Mg(2+) serves as cofactor.

It carries out the reaction riboflavin + ATP = FMN + ADP + H(+). It catalyses the reaction FMN + H2O = riboflavin + phosphate. It participates in cofactor biosynthesis; FMN biosynthesis; FMN from riboflavin (ATP route): step 1/1. In terms of biological role, bifunctional enzyme that catalyzes the hydrolysis of flavin-mononucleotide (FMN) to riboflavin (vitamin B2) and the phosphorylation of riboflavin to form (FMN) coenzyme. The polypeptide is Bifunctional riboflavin kinase/FMN phosphatase (Arabidopsis thaliana (Mouse-ear cress)).